The primary structure comprises 423 residues: D-tagatose-1,6-bisphosphate aldolase subunit GatZ (423 aa).

This sequence belongs to the GatZ/KbaZ family. GatZ subfamily. As to quaternary structure, forms a complex with GatY.

Its pathway is carbohydrate metabolism; D-tagatose 6-phosphate degradation; D-glyceraldehyde 3-phosphate and glycerone phosphate from D-tagatose 6-phosphate: step 2/2. In terms of biological role, component of the tagatose-1,6-bisphosphate aldolase GatYZ that is required for full activity and stability of the Y subunit. Could have a chaperone-like function for the proper and stable folding of GatY. When expressed alone, GatZ does not show any aldolase activity. Is involved in the catabolism of galactitol. This Salmonella choleraesuis (strain SC-B67) protein is D-tagatose-1,6-bisphosphate aldolase subunit GatZ.